The following is a 598-amino-acid chain: 2-succinyl-5-enolpyruvyl-6-hydroxy-3-cyclohexene-1-carboxylate synthase (598 aa).

This sequence belongs to the TPP enzyme family. MenD subfamily. Homodimer. Mg(2+) serves as cofactor. Requires Mn(2+) as cofactor. The cofactor is thiamine diphosphate.

The catalysed reaction is isochorismate + 2-oxoglutarate + H(+) = 5-enolpyruvoyl-6-hydroxy-2-succinyl-cyclohex-3-ene-1-carboxylate + CO2. The protein operates within quinol/quinone metabolism; 1,4-dihydroxy-2-naphthoate biosynthesis; 1,4-dihydroxy-2-naphthoate from chorismate: step 2/7. It functions in the pathway cofactor biosynthesis; phylloquinone biosynthesis. Its function is as follows. Catalyzes the thiamine diphosphate-dependent decarboxylation of 2-oxoglutarate and the subsequent addition of the resulting succinic semialdehyde-thiamine pyrophosphate anion to isochorismate to yield 2-succinyl-5-enolpyruvyl-6-hydroxy-3-cyclohexene-1-carboxylate (SEPHCHC). The protein is 2-succinyl-5-enolpyruvyl-6-hydroxy-3-cyclohexene-1-carboxylate synthase of Prochlorococcus marinus (strain NATL1A).